Reading from the N-terminus, the 239-residue chain is Ribonuclease 3 (239 aa).

In terms of domain architecture, RNase III spans 11–133 (HTAIQKKLGY…MFAAVSFDAD (123 aa)). Glutamate 46 provides a ligand contact to Mg(2+). The active site involves aspartate 50. Residues aspartate 119 and glutamate 122 each coordinate Mg(2+). The active site involves glutamate 122. One can recognise a DRBM domain in the interval 160 to 230 (DGKTALQEAL…AKEALKWLEE (71 aa)).

It belongs to the ribonuclease III family. As to quaternary structure, homodimer. The cofactor is Mg(2+).

It is found in the cytoplasm. It carries out the reaction Endonucleolytic cleavage to 5'-phosphomonoester.. Functionally, digests double-stranded RNA. Involved in the processing of primary rRNA transcript to yield the immediate precursors to the large and small rRNAs (23S and 16S). Processes some mRNAs, and tRNAs when they are encoded in the rRNA operon. Processes pre-crRNA and tracrRNA of type II CRISPR loci if present in the organism. The polypeptide is Ribonuclease 3 (Neisseria gonorrhoeae (strain NCCP11945)).